The sequence spans 699 residues: UV radiation resistance-associated gene protein (699 aa).

Residues 1–10 show a composition bias toward low complexity; the sequence is MSASASVGGP. Residues 1 to 24 are disordered; it reads MSASASVGGPVPQPPPGPAAALPP. The C2 domain occupies 23 to 149; the sequence is PPGSAARALH…YLGQQIHARN (127 aa). The interval 200–269 is sufficient for interaction with STX7; VTI1B AND STX8; sequence HRAQCAIKQT…REVALLHKQQ (70 aa). The stretch at 224 to 305 forms a coiled coil; the sequence is LRLTSTSNEL…LRKECTAKRE (82 aa). The sufficient for interaction with VPS16, required for interaction with CEP63 stretch occupies residues 270 to 442; the sequence is IALQDKGSAF…IAQLRYQHGL (173 aa). Residues 443-699 are required for interaction with PRKDC, XRCC6 and XRCC5; sequence GTPDLRQTLP…FRRPRRSSDK (257 aa). The tract at residues 486–591 is disordered; that stretch reads GGADVGFSGG…SQEQGEALSG (106 aa). The residue at position 493 (serine 493) is a Phosphoserine. Phosphoserine; by MTOR is present on serine 498. At serine 508 the chain carries Phosphoserine. Threonine 518 is modified (phosphothreonine). Serine 522 is modified (phosphoserine). The span at 523 to 535 shows a compositional bias: polar residues; it reads YNSALAQPVTTVP. The segment covering 545–556 has biased composition (low complexity); it reads TSLSSSLDTSLD. Phosphoserine is present on residues serine 549 and serine 550. Over residues 557-567 the composition is skewed to basic and acidic residues; sequence FSKENKKKGED. Phosphoserine is present on residues serine 571, serine 582, and serine 689.

Component of the PI3K (PI3KC3/PI3K-III/class III phosphatidylinositol 3-kinase) complex II (PI3KC3-C2) in which the core composed of the catalytic subunit PIK3C3, the regulatory subunit PIK3R4 and BECN1 is associated with UVRAG; in the complex interacts directly with BECN1. PI3KC3-C2 can associate with further regulatory subunits such as RUBCN and probably SH3GLB1/Bif-1. Interacts with SH3GLB1; UVRAG bridges the interaction to BECN1 indicative for an association with the PI3K complex PI3KC3-C2. Interacts with RINT1. Associates with the NRZ complex under basal conditions and dissociates from it under autophagy conditions to associate with the PI3K complex; these complex associations seem to be mutually exclusive. Interacts with VPS16; VPS11; VPS18; VPS33 (VPS33A or VPS33B) and VPS39; indicative for an association with a class C Vps tethering complex (possibly the HOPS complex). Interacts with RAB7A; RAB7A competes with UVRAG for RUBCN binding. Interacts with STX7, VTI1B, STX8. Interacts with PRKDC, XRCC6 and XRCC5; indicative for an association with the DNA-dependent protein kinase complex DNA-PK. Interacts with CEP63. Directly interacts with FEZ1 and SCOC; the interaction with SCOC is reduced by amino acid starvation, but the complex is stabilized in the presence of FEZ1. Interacts with BECN1P1/BECN2. Interacts with SLAMF1. Interacts with RUBCNL/PACER; promoting targeting of UVRAG to autophagosome. Interacts with WNK1. Post-translationally, phosphorylated at Ser-498 by MTOR under basal conditions; increases the interaction with RUBCN implicated in inhibitory effect of RUBCN on PI3KC3 and decreases interaction with RAB7,A and VPS16 and VPS39 (indicative for a class C Vps complex, possibly the HOPS complex). As to expression, highly expressed in brain, lung, kidney and liver.

The protein localises to the late endosome. The protein resides in the lysosome. Its subcellular location is the cytoplasmic vesicle. It localises to the autophagosome. It is found in the early endosome. The protein localises to the endoplasmic reticulum. The protein resides in the midbody. Its subcellular location is the chromosome. It localises to the centromere. Functionally, versatile protein that is involved in regulation of different cellular pathways implicated in membrane trafficking. Involved in regulation of the COPI-dependent retrograde transport from Golgi and the endoplasmic reticulum by associating with the NRZ complex; the function is dependent on its binding to phosphatidylinositol 3-phosphate (PtdIns(3)P). During autophagy acts as a regulatory subunit of the alternative PI3K complex II (PI3KC3-C2) that mediates formation of phosphatidylinositol 3-phosphate and is believed to be involved in maturation of autophagosomes and endocytosis. Activates lipid kinase activity of PIK3C3. Involved in the regulation of degradative endocytic trafficking and cytokinesis, and in regulation of ATG9A transport from the Golgi to the autophagosome; the functions seems to implicate its association with PI3KC3-C2. Involved in maturation of autophagosomes and degradative endocytic trafficking independently of BECN1 but depending on its association with a class C Vps complex (possibly the HOPS complex); the association is also proposed to promote autophagosome recruitment and activation of Rab7 and endosome-endosome fusion events. Enhances class C Vps complex (possibly HOPS complex) association with a SNARE complex and promotes fusogenic SNARE complex formation during late endocytic membrane fusion. In case of negative-strand RNA virus infection is required for efficient virus entry, promotes endocytic transport of virions and is implicated in a VAMP8-specific fusogenic SNARE complex assembly. Involved in maintaining chromosomal stability. Promotes DNA double-strand break (DSB) repair by association with DNA-dependent protein kinase complex DNA-PK and activating it in non-homologous end joining (NHEJ). Required for centrosome stability and proper chromosome segregation. This Homo sapiens (Human) protein is UV radiation resistance-associated gene protein (UVRAG).